The following is a 211-amino-acid chain: Guanylate kinase (211 aa).

The Guanylate kinase-like domain occupies 5 to 184; the sequence is GLLIVFSGPS…AAERVKRIIE (180 aa). Residue 12–19 coordinates ATP; that stretch reads GPSGVGKG.

Belongs to the guanylate kinase family.

The protein localises to the cytoplasm. The catalysed reaction is GMP + ATP = GDP + ADP. Its function is as follows. Essential for recycling GMP and indirectly, cGMP. This Streptococcus pyogenes serotype M3 (strain SSI-1) protein is Guanylate kinase.